We begin with the raw amino-acid sequence, 226 residues long: 8-oxoguanine DNA glycosylase/AP lyase (226 aa).

Active-site residues include K149 and D167.

The protein belongs to the type-2 OGG1 family.

The catalysed reaction is 2'-deoxyribonucleotide-(2'-deoxyribose 5'-phosphate)-2'-deoxyribonucleotide-DNA = a 3'-end 2'-deoxyribonucleotide-(2,3-dehydro-2,3-deoxyribose 5'-phosphate)-DNA + a 5'-end 5'-phospho-2'-deoxyribonucleoside-DNA + H(+). Its function is as follows. Catalyzes the excision of an oxidatively damaged form of guanine (7,8-dihydro-8-oxoguanine = 8-oxoG) from DNA. Also cleaves the DNA backbone at apurinic/apyrimidinic sites (AP sites). This is 8-oxoguanine DNA glycosylase/AP lyase from Aquifex aeolicus (strain VF5).